The primary structure comprises 364 residues: Nucleosome assembly protein 1;2 (364 aa).

Residues 32-86 (VESIKNTLQGLAARHTDVLESLEPKVRKRVEVLREIQSQHDDLEAKFFEERAALE) adopt a coiled-coil conformation. Residues 53–68 (LEPKVRKRVEVLREIQ) carry the Nuclear export signal motif. The Nuclear localization signal signature appears at 227–232 (KKKPKK). 2 disordered regions span residues 250-269 (FNFF…DEDT) and 301-364 (GEAA…CKQQ). 2 stretches are compositionally biased toward acidic residues: residues 259 to 269 (PDDDEEIDEDT) and 304 to 340 (AQDE…DDED). Cys361 bears the Cysteine methyl ester mark. Cys361 carries S-farnesyl cysteine lipidation. Residues 362–364 (KQQ) constitute a propeptide, removed in mature form.

It belongs to the nucleosome assembly protein (NAP) family. In terms of assembly, binds preferentially histone H1 in vitro. In terms of tissue distribution, highly expressed in tissues exhibiting active cell-division activities, such as root and shoot meristems and young flowers.

It is found in the nucleus. The protein localises to the cytoplasm. Its function is as follows. May modulate chromatin structure by regulation of nucleosome assembly/disassembly. The protein is Nucleosome assembly protein 1;2 (NAP1;2) of Oryza sativa subsp. indica (Rice).